Here is a 296-residue protein sequence, read N- to C-terminus: Nucleotide-binding protein ABC3036 (296 aa).

An ATP-binding site is contributed by 13–20; it reads GMSGAGKS. GTP is bound at residue 64-67; it reads DLRG.

This sequence belongs to the RapZ-like family.

Its function is as follows. Displays ATPase and GTPase activities. The protein is Nucleotide-binding protein ABC3036 of Shouchella clausii (strain KSM-K16) (Alkalihalobacillus clausii).